We begin with the raw amino-acid sequence, 350 residues long: NADH-cytochrome b5 reductase 2 (350 aa).

Residues 43-63 (PLVLALGGVAGIGAWYGLGGF) traverse the membrane as a helical segment. The 109-residue stretch at 96–204 (DQFVEFTLKE…KGPIAKFAYK (109 aa)) folds into the FAD-binding FR-type domain. An FAD-binding site is contributed by 207 to 242 (EFESIGMIAGGSGITPMYQVIQDIASNPSDKTKVTL).

This sequence belongs to the flavoprotein pyridine nucleotide cytochrome reductase family. Requires FAD as cofactor.

The protein localises to the mitochondrion outer membrane. The catalysed reaction is 2 Fe(III)-[cytochrome b5] + NADH = 2 Fe(II)-[cytochrome b5] + NAD(+) + H(+). Its function is as follows. May mediate the reduction of outer membrane cytochrome b5. The sequence is that of NADH-cytochrome b5 reductase 2 (MCR1) from Mycosarcoma maydis (Corn smut fungus).